The primary structure comprises 144 residues: MESPLWVRWLKVYAVGGVIIGSGALLFKYTTPTDEQLIASLSPELRLQYETERKLRQAEQQELMKIVQTTAESDQPIWKTGPIKSPWEKDTETVQQKEMFQKARADVAQREELQRIRKELAEIRQKSEQKTQEIVNTKSWWKFW.

The chain crosses the membrane as a helical span at residues 5-27; the sequence is LWVRWLKVYAVGGVIIGSGALLF. Positions 106–139 form a coiled coil; the sequence is DVAQREELQRIRKELAEIRQKSEQKTQEIVNTKS.

Belongs to the CBP4 family.

Its subcellular location is the mitochondrion inner membrane. Functionally, essential for the assembly of ubiquinol-cytochrome c reductase. It has a direct effect on the correct occurrence of the Rieske protein, core 4, core 5 and apocytochrome b. The sequence is that of Assembly factor CBP4 (CBP4) from Vanderwaltozyma polyspora (strain ATCC 22028 / DSM 70294 / BCRC 21397 / CBS 2163 / NBRC 10782 / NRRL Y-8283 / UCD 57-17) (Kluyveromyces polysporus).